The chain runs to 177 residues: Large ribosomal subunit protein uL6 (177 aa).

It belongs to the universal ribosomal protein uL6 family. In terms of assembly, part of the 50S ribosomal subunit.

This protein binds to the 23S rRNA, and is important in its secondary structure. It is located near the subunit interface in the base of the L7/L12 stalk, and near the tRNA binding site of the peptidyltransferase center. The chain is Large ribosomal subunit protein uL6 from Methylibium petroleiphilum (strain ATCC BAA-1232 / LMG 22953 / PM1).